The primary structure comprises 178 residues: MMGDASLSVLASSQVVAEGGNNFLVPNGTFFFVLAIFLIVLAVIGTFVVPPVMKVLRERDAMVAKTAADNRKAAEQFEAAQADYEEAMTEARVQASSLRDNARAEGRKVVEDARAKAEQEVLSTLQLAARQLKRERDAVELDLRANVASMSATLASRILGVDVAPAAATTSATKTSGR.

The chain crosses the membrane as a helical span at residues 30–50 (FFFVLAIFLIVLAVIGTFVVP).

The protein belongs to the ATPase B chain family. As to quaternary structure, F-type ATPases have 2 components, F(1) - the catalytic core - and F(0) - the membrane proton channel. F(1) has five subunits: alpha(3), beta(3), gamma(1), delta(1), epsilon(1). F(0) has three main subunits: a(1), b(2) and c(10-14). The alpha and beta chains form an alternating ring which encloses part of the gamma chain. F(1) is attached to F(0) by a central stalk formed by the gamma and epsilon chains, while a peripheral stalk is formed by the delta and b chains.

Its subcellular location is the cell membrane. Its function is as follows. F(1)F(0) ATP synthase produces ATP from ADP in the presence of a proton or sodium gradient. F-type ATPases consist of two structural domains, F(1) containing the extramembraneous catalytic core and F(0) containing the membrane proton channel, linked together by a central stalk and a peripheral stalk. During catalysis, ATP synthesis in the catalytic domain of F(1) is coupled via a rotary mechanism of the central stalk subunits to proton translocation. Component of the F(0) channel, it forms part of the peripheral stalk, linking F(1) to F(0). This Mycobacterium avium (strain 104) protein is ATP synthase subunit b.